The primary structure comprises 78 residues: MAQQRRGGRRRRKVDYIAANHIDYVDYKDVDLLKRFISERGKILPRRVTGTSAKNQRKVANAIKRARIMGLLPFVAED.

The protein belongs to the bacterial ribosomal protein bS18 family. In terms of assembly, part of the 30S ribosomal subunit. Forms a tight heterodimer with protein bS6.

Binds as a heterodimer with protein bS6 to the central domain of the 16S rRNA, where it helps stabilize the platform of the 30S subunit. This Lactobacillus acidophilus (strain ATCC 700396 / NCK56 / N2 / NCFM) protein is Small ribosomal subunit protein bS18.